A 90-amino-acid chain; its full sequence is Small ribosomal subunit protein uS15 (90 aa).

Belongs to the universal ribosomal protein uS15 family. As to quaternary structure, part of the 30S ribosomal subunit. Forms a bridge to the 50S subunit in the 70S ribosome, contacting the 23S rRNA.

In terms of biological role, one of the primary rRNA binding proteins, it binds directly to 16S rRNA where it helps nucleate assembly of the platform of the 30S subunit by binding and bridging several RNA helices of the 16S rRNA. Forms an intersubunit bridge (bridge B4) with the 23S rRNA of the 50S subunit in the ribosome. The chain is Small ribosomal subunit protein uS15 from Helicobacter pylori (strain P12).